Consider the following 264-residue polypeptide: Thymidylate synthase (264 aa).

DUMP is bound at residue Arg-21. Residue His-51 coordinates (6R)-5,10-methylene-5,6,7,8-tetrahydrofolate. 126–127 (RR) lines the dUMP pocket. Catalysis depends on Cys-146, which acts as the Nucleophile. DUMP-binding positions include 166–169 (RSCD), Asn-177, and 207–209 (HLY). (6R)-5,10-methylene-5,6,7,8-tetrahydrofolate is bound at residue Asp-169. (6R)-5,10-methylene-5,6,7,8-tetrahydrofolate is bound at residue Ser-263.

This sequence belongs to the thymidylate synthase family. Bacterial-type ThyA subfamily. In terms of assembly, homodimer.

The protein localises to the cytoplasm. It carries out the reaction dUMP + (6R)-5,10-methylene-5,6,7,8-tetrahydrofolate = 7,8-dihydrofolate + dTMP. It participates in pyrimidine metabolism; dTTP biosynthesis. In terms of biological role, catalyzes the reductive methylation of 2'-deoxyuridine-5'-monophosphate (dUMP) to 2'-deoxythymidine-5'-monophosphate (dTMP) while utilizing 5,10-methylenetetrahydrofolate (mTHF) as the methyl donor and reductant in the reaction, yielding dihydrofolate (DHF) as a by-product. This enzymatic reaction provides an intracellular de novo source of dTMP, an essential precursor for DNA biosynthesis. The protein is Thymidylate synthase of Buchnera aphidicola subsp. Acyrthosiphon pisum (strain 5A).